Reading from the N-terminus, the 292-residue chain is uncharacterized protein (292 aa).

Lys8 participates in a covalent cross-link: Glycyl lysine isopeptide (Lys-Gly) (interchain with G-Cter in SUMO2). The tract at residues 47–67 (TKRKMLPSSSSRMRSDGFDEE) is disordered. Residue Lys76 forms a Glycyl lysine isopeptide (Lys-Gly) (interchain with G-Cter in SUMO2) linkage. Phosphothreonine is present on Asn94. Phosphoserine occurs at positions 96 and 97. A disordered region spans residues 122 to 292 (ETDSDQQDIT…ERSAESSEDD (171 aa)). Residue Thr123 is modified to Phosphothreonine. Ser125 and Asp126 each carry phosphoserine. Positions 128-140 (QDITNGKKTSPQV) are enriched in polar residues. Residues 147–173 (SRKHKKSKKSHKKKQKKRSHKKQKKSK) show a composition bias toward basic residues. The segment covering 180–194 (TADSSSEFSEETGAS) has biased composition (polar residues). Composition is skewed to basic residues over residues 197–215 (RKGK…KSLK) and 247–259 (KKTK…KKAH). Basic and acidic residues predominate over residues 280-292 (ATDERSAESSEDD).

This is an uncharacterized protein from Homo sapiens (Human).